The chain runs to 452 residues: PHO85 cyclin CLG1 (452 aa).

This sequence belongs to the cyclin family. PCL1,2 subfamily. Forms a cyclin-CDK complex with PHO85.

Its function is as follows. Cyclin partner of the cyclin-dependent kinase (CDK) PHO85. Has a role in cell integrity and polarized cell growth together with the other PCL1/PCL2 cyclin family members. In Saccharomyces cerevisiae (strain ATCC 204508 / S288c) (Baker's yeast), this protein is PHO85 cyclin CLG1 (CLG1).